The following is a 173-amino-acid chain: Bifunctional protein PyrR (173 aa).

The short motif at 93–105 is the PRPP-binding element; sequence VILVDDVLYTGRT.

This sequence belongs to the purine/pyrimidine phosphoribosyltransferase family. PyrR subfamily. In terms of assembly, homodimer and homohexamer; in equilibrium.

It catalyses the reaction UMP + diphosphate = 5-phospho-alpha-D-ribose 1-diphosphate + uracil. Regulates transcriptional attenuation of the pyrimidine nucleotide (pyr) operon by binding in a uridine-dependent manner to specific sites on pyr mRNA. This disrupts an antiterminator hairpin in the RNA and favors formation of a downstream transcription terminator, leading to a reduced expression of downstream genes. Functionally, also displays a weak uracil phosphoribosyltransferase activity which is not physiologically significant. The polypeptide is Bifunctional protein PyrR (Streptococcus thermophilus (strain CNRZ 1066)).